The following is a 594-amino-acid chain: Beta-mannosyltransferase 3 (594 aa).

Residues 1–6 are Cytoplasmic-facing; it reads MRIRSN. Residues 7 to 27 form a helical membrane-spanning segment; the sequence is VLLLSTAGALALVWFAVVFSW. The Extracellular segment spans residues 28–594; that stretch reads DDKSIFGIPT…KDEVKDTKAK (567 aa). Asn-305 carries an N-linked (GlcNAc...) asparagine glycan. A coiled-coil region spans residues 512–594; the sequence is VTRGEEDRLK…KDEVKDTKAK (83 aa). Residues 517-558 are compositionally biased toward basic and acidic residues; the sequence is EDRLKNKEKERKIEEKRKKEEERKKKEEEKKKKEEEEKKKKE. The tract at residues 517–564 is disordered; sequence EDRLKNKEKERKIEEKRKKEEERKKKEEEKKKKEEEEKKKKEEEEEEE.

The protein belongs to the BMT family.

It localises to the membrane. Its function is as follows. Beta-mannosyltransferase involved in cell wall biosynthesis. This chain is Beta-mannosyltransferase 3 (BMT3), found in Komagataella phaffii (strain ATCC 76273 / CBS 7435 / CECT 11047 / NRRL Y-11430 / Wegner 21-1) (Yeast).